The following is a 147-amino-acid chain: Small ribosomal subunit protein uS5 (147 aa).

One can recognise an S5 DRBM domain in the interval 9–72 (FEEVIVDIGR…DDAFKNIVEV (64 aa)).

The protein belongs to the universal ribosomal protein uS5 family. As to quaternary structure, part of the 30S ribosomal subunit. Contacts proteins S4 and S8.

In terms of biological role, with S4 and S12 plays an important role in translational accuracy. Functionally, located at the back of the 30S subunit body where it stabilizes the conformation of the head with respect to the body. This Campylobacter jejuni subsp. jejuni serotype O:6 (strain 81116 / NCTC 11828) protein is Small ribosomal subunit protein uS5.